We begin with the raw amino-acid sequence, 534 residues long: CTP synthase (534 aa).

Residues 1–267 (MTKYIFVTGG…DQIVCDHLKL (267 aa)) form an amidoligase domain region. Ser-13 contributes to the CTP binding site. Ser-13 contributes to the UTP binding site. Position 14–19 (14–19 (SIGKGI)) interacts with ATP. Residue Tyr-54 participates in L-glutamine binding. Asp-71 provides a ligand contact to ATP. Residues Asp-71 and Glu-141 each coordinate Mg(2+). Residues 148-150 (DIE), 188-193 (KTKPTQ), and Lys-224 each bind CTP. UTP contacts are provided by residues 188–193 (KTKPTQ) and Lys-224. The Glutamine amidotransferase type-1 domain maps to 292–534 (KIALVGKYVE…FVTAAVENAK (243 aa)). Residue Gly-354 participates in L-glutamine binding. Catalysis depends on Cys-381, which acts as the Nucleophile; for glutamine hydrolysis. Residues 382 to 385 (LGMQ), Glu-405, and Arg-463 each bind L-glutamine. Catalysis depends on residues His-508 and Glu-510.

The protein belongs to the CTP synthase family. As to quaternary structure, homotetramer.

It carries out the reaction UTP + L-glutamine + ATP + H2O = CTP + L-glutamate + ADP + phosphate + 2 H(+). The catalysed reaction is L-glutamine + H2O = L-glutamate + NH4(+). It catalyses the reaction UTP + NH4(+) + ATP = CTP + ADP + phosphate + 2 H(+). Its pathway is pyrimidine metabolism; CTP biosynthesis via de novo pathway; CTP from UDP: step 2/2. Its activity is regulated as follows. Allosterically activated by GTP, when glutamine is the substrate; GTP has no effect on the reaction when ammonia is the substrate. The allosteric effector GTP functions by stabilizing the protein conformation that binds the tetrahedral intermediate(s) formed during glutamine hydrolysis. Inhibited by the product CTP, via allosteric rather than competitive inhibition. Catalyzes the ATP-dependent amination of UTP to CTP with either L-glutamine or ammonia as the source of nitrogen. Regulates intracellular CTP levels through interactions with the four ribonucleotide triphosphates. The protein is CTP synthase of Streptococcus thermophilus (strain CNRZ 1066).